Here is a 105-residue protein sequence, read N- to C-terminus: uncharacterized protein (105 aa).

Residues 33–100 (LYALDAGTTD…SEDLRVLVVF (68 aa)) form the Cupin type-2 domain.

This is an uncharacterized protein from Streptomyces coelicolor (strain ATCC BAA-471 / A3(2) / M145).